Reading from the N-terminus, the 1388-residue chain is ESX-5 secretion system protein EccC5 (1388 aa).

Transmembrane regions (helical) follow at residues tryptophan 38–phenylalanine 58 and phenylalanine 65–phenylalanine 85. FtsK domains are found at residues glycine 477–glutamine 679, glutamine 855–lysine 1049, and leucine 1158–glutamate 1351. ATP is bound by residues glycine 500 to serine 507, glycine 873 to threonine 880, and glycine 1175 to threonine 1182.

Part of the ESX-5 / type VII secretion system (T7SS), which is composed of cytosolic and membrane components. The ESX-5 membrane complex is composed of EccB5, EccC5, EccD5 and EccE5.

The protein localises to the cell inner membrane. Part of the ESX-5 specialized secretion system, which is responsible for the secretion of EsxN and a number of PE_PGRS and PPE proteins. This component is essential for ESX-5 complex stability and secretion. In Mycobacterium marinum (strain ATCC BAA-535 / M), this protein is ESX-5 secretion system protein EccC5.